A 98-amino-acid chain; its full sequence is NADH-ubiquinone oxidoreductase chain 4L (98 aa).

3 consecutive transmembrane segments (helical) span residues Met-1–Met-21, Ser-29–Leu-49, and Ile-61–Val-81.

It belongs to the complex I subunit 4L family. In terms of assembly, core subunit of respiratory chain NADH dehydrogenase (Complex I) which is composed of 45 different subunits.

The protein localises to the mitochondrion inner membrane. The catalysed reaction is a ubiquinone + NADH + 5 H(+)(in) = a ubiquinol + NAD(+) + 4 H(+)(out). In terms of biological role, core subunit of the mitochondrial membrane respiratory chain NADH dehydrogenase (Complex I) which catalyzes electron transfer from NADH through the respiratory chain, using ubiquinone as an electron acceptor. Part of the enzyme membrane arm which is embedded in the lipid bilayer and involved in proton translocation. This is NADH-ubiquinone oxidoreductase chain 4L (MT-ND4L) from Urotrichus talpoides (Japanese shrew mole).